The sequence spans 155 residues: Endoribonuclease YbeY (155 aa).

3 residues coordinate Zn(2+): His114, His118, and His124.

This sequence belongs to the endoribonuclease YbeY family. Requires Zn(2+) as cofactor.

Its subcellular location is the cytoplasm. Single strand-specific metallo-endoribonuclease involved in late-stage 70S ribosome quality control and in maturation of the 3' terminus of the 16S rRNA. This Escherichia coli O157:H7 protein is Endoribonuclease YbeY.